A 228-amino-acid chain; its full sequence is Uracil-DNA glycosylase (228 aa).

The active-site Proton acceptor is Asp64.

This sequence belongs to the uracil-DNA glycosylase (UDG) superfamily. UNG family.

The protein resides in the cytoplasm. The catalysed reaction is Hydrolyzes single-stranded DNA or mismatched double-stranded DNA and polynucleotides, releasing free uracil.. Excises uracil residues from the DNA which can arise as a result of misincorporation of dUMP residues by DNA polymerase or due to deamination of cytosine. The sequence is that of Uracil-DNA glycosylase from Yersinia enterocolitica serotype O:8 / biotype 1B (strain NCTC 13174 / 8081).